The chain runs to 83 residues: Subtilisin-chymotrypsin inhibitor CI-1B (83 aa).

Residues 1–28 (MRSMEGSVPKYPEPTEGSIGASGAKRSW) are disordered.

This sequence belongs to the protease inhibitor I13 (potato type I serine protease inhibitor) family.

Inhibits both subtilisin and chymotrypsin. This Hordeum vulgare (Barley) protein is Subtilisin-chymotrypsin inhibitor CI-1B.